The following is a 165-amino-acid chain: Protoporphyrinogen IX oxidase (165 aa).

A run of 4 helical transmembrane segments spans residues 26–46, 77–97, 99–119, and 145–165; these read LHVI…RLFV, AMIA…IVDW, MLWP…HMWL, and PTLL…YWGF. Heme is bound at residue histidine 27. Position 105 (lysine 105) interacts with heme.

Belongs to the HemJ family. Homodimer. Requires heme b as cofactor.

The protein resides in the cell membrane. It carries out the reaction protoporphyrinogen IX + 3 A = protoporphyrin IX + 3 AH2. The protein operates within porphyrin-containing compound metabolism; protoporphyrin-IX biosynthesis; protoporphyrin-IX from protoporphyrinogen-IX: step 1/1. Its function is as follows. Catalyzes the oxidation of protoporphyrinogen IX to protoporphyrin IX. Is involved in the biosynthesis of tetrapyrrole molecules like heme and chlorophyll. Does not use oxygen or artificial electron acceptors such as menadione or benzoquinone. The protein is Protoporphyrinogen IX oxidase of Cereibacter sphaeroides (strain ATCC 17023 / DSM 158 / JCM 6121 / CCUG 31486 / LMG 2827 / NBRC 12203 / NCIMB 8253 / ATH 2.4.1.) (Rhodobacter sphaeroides).